The following is a 347-amino-acid chain: Phosphoribosylformylglycinamidine cyclo-ligase (347 aa).

It belongs to the AIR synthase family.

The protein localises to the cytoplasm. It carries out the reaction 2-formamido-N(1)-(5-O-phospho-beta-D-ribosyl)acetamidine + ATP = 5-amino-1-(5-phospho-beta-D-ribosyl)imidazole + ADP + phosphate + H(+). It participates in purine metabolism; IMP biosynthesis via de novo pathway; 5-amino-1-(5-phospho-D-ribosyl)imidazole from N(2)-formyl-N(1)-(5-phospho-D-ribosyl)glycinamide: step 2/2. The protein is Phosphoribosylformylglycinamidine cyclo-ligase of Desulfatibacillum aliphaticivorans.